Here is a 445-residue protein sequence, read N- to C-terminus: Phosphoglucosamine mutase (445 aa).

Ser101 (phosphoserine intermediate) is an active-site residue. Residues Ser101, Asp240, Asp242, and Asp244 each coordinate Mg(2+). Ser101 carries the phosphoserine modification.

Belongs to the phosphohexose mutase family. Mg(2+) is required as a cofactor. Activated by phosphorylation.

It carries out the reaction alpha-D-glucosamine 1-phosphate = D-glucosamine 6-phosphate. In terms of biological role, catalyzes the conversion of glucosamine-6-phosphate to glucosamine-1-phosphate. The chain is Phosphoglucosamine mutase from Pseudomonas fluorescens (strain SBW25).